A 1044-amino-acid chain; its full sequence is MSDSAQSIKVLGELFEKLSVATAENREATATEIASFLNGNIIEHDVPEEFFKNLTKAVKDKKTAAAALETIAHIANENNLSPSVEPYIVDLVPEVCVKTGDKDKDVQSIASETLLAIVKAIDPVAIKVILPHLTKSLVTTNKWQEKVSVLAAISALVDAAKTQVALRMPELIPVLSEAMWDTKKEVKHAATATMTKATETVDNKDIERFIPELIQCIADPSQVSETVHLLGATTFVAEVTPATLSIMVPLLNRGLAERETSIKRKAAVIIDNMCKLVEDPQVVAPFLEKLLPGLKNNFATIADPEAREVTLRGLKTLRRVGNVSDDDTLPEVSHAGDIVTTRGVLDELTKDTPIAPRFAPVVNYIAAIAADLIDERIIDQQAWFTHVTPYMTVFFHEKQSKEIIDDFRKRAVDNIPVGPNFDDEEDEGEDLCNCEFSLAYGAKILLNKTQLRLKRARRYGLCGPNGAGKSTLMRAIANGQVDGFPTQDECRTVYVEHDIDGTQADTSVLDFVFQGDVGTREVITEKLREFGFSDEMIAMPIMSLSGGWKMKLALARAVLKNADILLLDEPTNHLDTVNVAWLVNYLNTCGITSIIVSHDSGFLDNVCQYIIHYEGLKLRKYKGNLSEFVKKCPTAKSYYELGASDLEFKFPEPGFLEGVKTKQKAIVKVSNMSFQYPGTSKPQIADINFQCSLSSRIAVIGPNGAGKSTLINVLTGELLPTTGEVYTHENCRIAYIKQHAFAHIENHLDKTPSEYIQWRFQTGEDRETMDRANRQINESDAESMNKIFKIDGTPRRIAGIHSRRKFKNTYEYECSFLLGENIGMKSERWVPMMSVDNAWLPRGELIESHSKMVAEVDMKEALASGQFRPLTRKEIEEHCAMLGLEAELVSHSRIRGLSGGQKVKLVLAACTWQRPHLIVLDEPTNYLDRDSLGALSKALKAFEGGVIIITHSAEFTKDLTEEVWAVKDGIMTPSGHNWVSGQGSGPRLEKKEDEGDKFDAMGNKIATGNKKKKLSSAELRKKKKERMKKKKELGDAYVSSDDEF.

Residues 5–42 (AQSIKVLGELFEKLSVATAENREATATEIASFLNGNII) form an HEAT 1 repeat. ADP is bound by residues Ile42 and His44. An HEAT 2 repeat occupies 45–80 (DVPEEFFKNLTKAVKDKKTAAAALETIAHIANENNL). Ser83 contacts ADP. 6 HEAT repeats span residues 86–123 (PYIVDLVPEVCVKTGDKDKDVQSIASETLLAIVKAIDP), 124–162 (VAIKVILPHLTKSLVTTNKWQEKVSVLAAISALVDAAKT), 166–203 (LRMPELIPVLSEAMWDTKKEVKHAATATMTKATETVDN), 205–241 (DIERFIPELIQCIADPSQVSETVHLLGATTFVAEVTP), 242–279 (ATLSIMVPLLNRGLAERETSIKRKAAVIIDNMCKLVED), and 285–323 (PFLEKLLPGLKNNFATIADPEAREVTLRGLKTLRRVGNV). ADP is bound by residues Thr392, His396, and Glu397. ABC transporter domains lie at 426–641 (DEGE…YYEL) and 667–993 (VKVS…KKED). ADP contacts are provided by Asn703, Glu922, Asn925, and His951. Residues 975–1044 (GHNWVSGQGS…DAYVSSDDEF (70 aa)) are disordered. Residues 987-999 (RLEKKEDEGDKFD) are compositionally biased toward basic and acidic residues. Basic residues predominate over residues 1009 to 1031 (NKKKKLSSAELRKKKKERMKKKK).

The protein belongs to the ABC transporter superfamily. ABCF family. EF3 subfamily. As to quaternary structure, monomer.

Its subcellular location is the cytoplasm. It catalyses the reaction ATP + H2O = ADP + phosphate + H(+). It participates in protein biosynthesis; polypeptide chain elongation. In terms of biological role, ribosome-dependent ATPase that functions in cytoplasmic translation elongation. Required for the ATP-dependent release of deacylated tRNA from the ribosomal E-site during protein biosynthesis. Stimulates the eEF1A-dependent binding of aminoacyl-tRNA to the ribosomal A-site, which has reduced affinity for tRNA as long as the E-site is occupied. Assists translation termination by stimulating the release of nascent protein from the ribosome by release factors. The sequence is that of Elongation factor 3 (TEF3) from Eremothecium gossypii (strain ATCC 10895 / CBS 109.51 / FGSC 9923 / NRRL Y-1056) (Yeast).